The following is a 547-amino-acid chain: CTP synthase (547 aa).

Residues 1 to 265 are amidoligase domain; the sequence is MTKFVFVTGG…DRIVCEKLAL (265 aa). Ser-13 is a CTP binding site. Ser-13 contributes to the UTP binding site. Residues 14–19 and Asp-71 each bind ATP; that span reads SLGKGI. Asp-71 and Glu-139 together coordinate Mg(2+). Residues 146-148, 186-191, and Lys-222 contribute to the CTP site; these read DIE and KTKPTQ. UTP contacts are provided by residues 186–191 and Lys-222; that span reads KTKPTQ. The Glutamine amidotransferase type-1 domain occupies 290–542; the sequence is TIGMVGKYVD…IKAALAHKHA (253 aa). Gly-351 lines the L-glutamine pocket. Cys-378 acts as the Nucleophile; for glutamine hydrolysis in catalysis. Residues 379-382, Glu-402, and Arg-468 contribute to the L-glutamine site; that span reads LGMQ. Residues His-515 and Glu-517 contribute to the active site.

Belongs to the CTP synthase family. In terms of assembly, homotetramer.

It catalyses the reaction UTP + L-glutamine + ATP + H2O = CTP + L-glutamate + ADP + phosphate + 2 H(+). It carries out the reaction L-glutamine + H2O = L-glutamate + NH4(+). The catalysed reaction is UTP + NH4(+) + ATP = CTP + ADP + phosphate + 2 H(+). The protein operates within pyrimidine metabolism; CTP biosynthesis via de novo pathway; CTP from UDP: step 2/2. Its activity is regulated as follows. Allosterically activated by GTP, when glutamine is the substrate; GTP has no effect on the reaction when ammonia is the substrate. The allosteric effector GTP functions by stabilizing the protein conformation that binds the tetrahedral intermediate(s) formed during glutamine hydrolysis. Inhibited by the product CTP, via allosteric rather than competitive inhibition. Functionally, catalyzes the ATP-dependent amination of UTP to CTP with either L-glutamine or ammonia as the source of nitrogen. Regulates intracellular CTP levels through interactions with the four ribonucleotide triphosphates. The sequence is that of CTP synthase from Janthinobacterium sp. (strain Marseille) (Minibacterium massiliensis).